We begin with the raw amino-acid sequence, 417 residues long: Echinulin prenyltransferase 1 (417 aa).

Dimethylallyl diphosphate contacts are provided by Arg90, Lys179, Tyr181, Lys248, Tyr250, Tyr333, Tyr398, and Tyr402.

Belongs to the tryptophan dimethylallyltransferase family.

It carries out the reaction cyclo(L-tryptophyl-L-alanyl) + dimethylallyl diphosphate = preechinulin + diphosphate. It functions in the pathway secondary metabolite biosynthesis. The protein operates within alkaloid biosynthesis. Functionally, prenyltransferase; part of the gene cluster that mediates the biosynthesis of echinulin family alkaloid. The pathway begins with the biosynthesis of the cyclic dipeptide cyclo-L-Trp-L-Ala (cyclo-TA) by the NRPS echPS via condensation of L-alanine and L-tryptophan. The prenyltransferase echPT1 then catalyzes the first prenylation step, a reverse prenylation reaction at C2, to yield preechinulin. Preechinulin is the substrate of the cytochrome P450 monooxygenase echP450 that catalyzes the formation of the double bond between C10 and C11 to produce neoechulin A. The unique prenyltransferase echPT2 functions as a competitive enzyme with echP450 for preechinulin metabolization and uses preechinulin for effective regiospecific prenylations. Preechinulin is prenylated by echPT2 at C5 or C7. C7-prenylation leads to accumulation of tardioxopiperazine B without further modification by echPT2. In contrast, the C5-prenylated tardioxopiperazine A can be prenylated again by echPT2, predominantly at C7 to form echinulin or less frequently at C4 to give variecolorin L. EchPT2 also accepts neoechilunin A to produce varlecolorin G (prenylation at C5) or isoechinulin A (prenylation at C7). EchPT2 further converts isoechinulin A into dehydroechinulin. Moreover, a yet unidentified enzyme can also convert neoechilunin A into neoechilunin B by introducing a double bond between positions C14 and C17 and thus provides a further substrate to echPT2 for C5 and C7 prenylation. The chain is Echinulin prenyltransferase 1 from Aspergillus ruber (Eurotium rubrum).